Here is an 806-residue protein sequence, read N- to C-terminus: Ribonucleoside-diphosphate reductase large subunit (806 aa).

In terms of domain architecture, ATP-cone spans 1–91 (MYVLNRKGEE…TDNLHKNTSD (91 aa)). Residues 5–6 (NR), 11–17 (EDISFDQ), T52, and D56 each bind ATP. A GDP-binding site is contributed by S215. A disulfide bridge connects residues C216 and C442. DTTP contacts are provided by residues 224 to 226 (DSI), K241, R254, and 261 to 262 (RG). Residue N425 coordinates GDP. N425 acts as the Proton acceptor in catalysis. The active-site Cysteine radical intermediate is the C427. GDP contacts are provided by residues E429 and 604–607 (TAST). The Proton acceptor role is filled by E429.

It belongs to the ribonucleoside diphosphate reductase large chain family. As to quaternary structure, heterodimer of a large and a small subunit.

The catalysed reaction is a 2'-deoxyribonucleoside 5'-diphosphate + [thioredoxin]-disulfide + H2O = a ribonucleoside 5'-diphosphate + [thioredoxin]-dithiol. Under complex allosteric control mediated by deoxynucleoside triphosphates and ATP binding to separate specificity and activation sites on the large subunit. The type of nucleotide bound at the specificity site determines substrate preference. It seems probable that ATP makes the enzyme reduce CDP and UDP, dGTP favors ADP reduction and dTTP favors GDP reduction. Stimulated by ATP and inhibited by dATP binding to the activity site. Its function is as follows. Provides the precursors necessary for DNA synthesis. Catalyzes the biosynthesis of deoxyribonucleotides from the corresponding ribonucleotides. The protein is Ribonucleoside-diphosphate reductase large subunit (RNR1) of Plasmodium falciparum (isolate Dd2).